The sequence spans 231 residues: Probable tetraspanin tspE (231 aa).

At 1–21 (MTFVDNFEFNQNTPRLVRGPF) the chain is on the cytoplasmic side. Residues 22 to 42 (IILNSIIFSLSFILLCSTGII) form a helical membrane-spanning segment. The Extracellular portion of the chain corresponds to 43-58 (IYYLNEYYLVKDLTIP). The helical transmembrane segment at 59 to 79 (LGSFILSAYMVITTIVGGIAI) threads the bilayer. Over 80–83 (WKKK) the chain is Cytoplasmic. Residues 84–104 (LGLHLTFMVFLVVLIVCLVGV) traverse the membrane as a helical segment. Residues 105–195 (SAKMIVDSGN…VESILKYLGY (91 aa)) are Extracellular-facing. The helical transmembrane segment at 196–216 (YGIVLSVIELILLILSGFFLL) threads the bilayer. Over 217-231 (KTNKNVKSKSFILQD) the chain is Cytoplasmic.

It belongs to the tetraspanin (TM4SF) family.

It is found in the membrane. The chain is Probable tetraspanin tspE (tspE) from Dictyostelium discoideum (Social amoeba).